A 385-amino-acid polypeptide reads, in one-letter code: MAKRDYYEVLGVSKGASADEIKKGFRTKAKELHPDRNADNPEAESQFKEANEAYDVLKDADKKAAYDRFGHAAFDGGMAGGPRGGGGQGQGDFASAFSDVFEDLFGDFMGGQRGRPGGARTQATRGSDLRYNLSITLEDAYNGLSKQITVPSSVACSSCDGTGSEAGAEPTSCPTCSGMGKVRAQQGFFTVERTCPTCNGMGQIVKNPCRTCGGAGRQEKDRALSVNIPAGVETGTRIRLSGEGEAGLRGGPAGDLYIFVEVQDHALFQRDGMDLFCRVPVSMVSAALGGEIEVPSIDGGRSRVRVPEGSQSGRQMRLRGKGMPALRGPGLGEMYIELMVETPVNLTGDQAELLRQFEESCKKTNNPNASGFFDKVKSFWDKVRD.

The 66-residue stretch at 5 to 70 (DYYEVLGVSK…DKKAAYDRFG (66 aa)) folds into the J domain. Residues 143–221 (GLSKQITVPS…CGGAGRQEKD (79 aa)) form a CR-type zinc finger. The Zn(2+) site is built by Cys-156, Cys-159, Cys-173, Cys-176, Cys-195, Cys-198, Cys-209, and Cys-212. 4 CXXCXGXG motif repeats span residues 156-163 (CSSCDGTG), 173-180 (CPTCSGMG), 195-202 (CPTCNGMG), and 209-216 (CRTCGGAG). Residues 299-323 (GGRSRVRVPEGSQSGRQMRLRGKGM) form a disordered region.

This sequence belongs to the DnaJ family. In terms of assembly, homodimer. The cofactor is Zn(2+).

The protein localises to the cytoplasm. Functionally, participates actively in the response to hyperosmotic and heat shock by preventing the aggregation of stress-denatured proteins and by disaggregating proteins, also in an autonomous, DnaK-independent fashion. Unfolded proteins bind initially to DnaJ; upon interaction with the DnaJ-bound protein, DnaK hydrolyzes its bound ATP, resulting in the formation of a stable complex. GrpE releases ADP from DnaK; ATP binding to DnaK triggers the release of the substrate protein, thus completing the reaction cycle. Several rounds of ATP-dependent interactions between DnaJ, DnaK and GrpE are required for fully efficient folding. Also involved, together with DnaK and GrpE, in the DNA replication of plasmids through activation of initiation proteins. The polypeptide is Chaperone protein DnaJ (Jannaschia sp. (strain CCS1)).